Here is a 120-residue protein sequence, read N- to C-terminus: UPF0231 protein CKO_03249 (120 aa).

It belongs to the UPF0231 family.

The chain is UPF0231 protein CKO_03249 from Citrobacter koseri (strain ATCC BAA-895 / CDC 4225-83 / SGSC4696).